Consider the following 313-residue polypeptide: 4-diphosphocytidyl-2-C-methyl-D-erythritol kinase (313 aa).

The active site involves Lys-29. ATP is bound at residue 113-123 (PMGGGVGGGSS). The active site involves Asp-155.

The protein belongs to the GHMP kinase family. IspE subfamily.

The catalysed reaction is 4-CDP-2-C-methyl-D-erythritol + ATP = 4-CDP-2-C-methyl-D-erythritol 2-phosphate + ADP + H(+). It participates in isoprenoid biosynthesis; isopentenyl diphosphate biosynthesis via DXP pathway; isopentenyl diphosphate from 1-deoxy-D-xylulose 5-phosphate: step 3/6. Catalyzes the phosphorylation of the position 2 hydroxy group of 4-diphosphocytidyl-2C-methyl-D-erythritol. This Haemophilus influenzae (strain ATCC 51907 / DSM 11121 / KW20 / Rd) protein is 4-diphosphocytidyl-2-C-methyl-D-erythritol kinase.